The primary structure comprises 374 residues: Chaperone protein DnaJ (374 aa).

Residues Asp-4–Gly-68 form the J domain. Residues Gly-133–Thr-215 form a CR-type zinc finger. Positions 146, 149, 163, 166, 189, 192, 203, and 206 each coordinate Zn(2+). CXXCXGXG motif repeat units follow at residues Cys-146–Gly-153, Cys-163–Gly-170, Cys-189–Gly-196, and Cys-203–Gly-210.

Belongs to the DnaJ family. In terms of assembly, homodimer. It depends on Zn(2+) as a cofactor.

It localises to the cytoplasm. In terms of biological role, participates actively in the response to hyperosmotic and heat shock by preventing the aggregation of stress-denatured proteins and by disaggregating proteins, also in an autonomous, DnaK-independent fashion. Unfolded proteins bind initially to DnaJ; upon interaction with the DnaJ-bound protein, DnaK hydrolyzes its bound ATP, resulting in the formation of a stable complex. GrpE releases ADP from DnaK; ATP binding to DnaK triggers the release of the substrate protein, thus completing the reaction cycle. Several rounds of ATP-dependent interactions between DnaJ, DnaK and GrpE are required for fully efficient folding. Also involved, together with DnaK and GrpE, in the DNA replication of plasmids through activation of initiation proteins. The chain is Chaperone protein DnaJ from Microcystis aeruginosa (strain NIES-843 / IAM M-2473).